The primary structure comprises 481 residues: ATP synthase subunit beta (481 aa).

Residue 160–167 (GGAGVGKT) participates in ATP binding.

Belongs to the ATPase alpha/beta chains family. F-type ATPases have 2 components, CF(1) - the catalytic core - and CF(0) - the membrane proton channel. CF(1) has five subunits: alpha(3), beta(3), gamma(1), delta(1), epsilon(1). CF(0) has three main subunits: a(1), b(2) and c(9-12). The alpha and beta chains form an alternating ring which encloses part of the gamma chain. CF(1) is attached to CF(0) by a central stalk formed by the gamma and epsilon chains, while a peripheral stalk is formed by the delta and b chains.

The protein resides in the cell inner membrane. It catalyses the reaction ATP + H2O + 4 H(+)(in) = ADP + phosphate + 5 H(+)(out). Functionally, produces ATP from ADP in the presence of a proton gradient across the membrane. The catalytic sites are hosted primarily by the beta subunits. The chain is ATP synthase subunit beta from Stigmatella aurantiaca.